A 274-amino-acid chain; its full sequence is Thiazole synthase (274 aa).

Catalysis depends on Lys-115, which acts as the Schiff-base intermediate with DXP. 1-deoxy-D-xylulose 5-phosphate is bound by residues Gly-176, Ala-202 to Gly-203, and Asn-224 to Ser-225.

This sequence belongs to the ThiG family. Homotetramer. Forms heterodimers with either ThiH or ThiS.

Its subcellular location is the cytoplasm. The enzyme catalyses [ThiS sulfur-carrier protein]-C-terminal-Gly-aminoethanethioate + 2-iminoacetate + 1-deoxy-D-xylulose 5-phosphate = [ThiS sulfur-carrier protein]-C-terminal Gly-Gly + 2-[(2R,5Z)-2-carboxy-4-methylthiazol-5(2H)-ylidene]ethyl phosphate + 2 H2O + H(+). It participates in cofactor biosynthesis; thiamine diphosphate biosynthesis. In terms of biological role, catalyzes the rearrangement of 1-deoxy-D-xylulose 5-phosphate (DXP) to produce the thiazole phosphate moiety of thiamine. Sulfur is provided by the thiocarboxylate moiety of the carrier protein ThiS. In vitro, sulfur can be provided by H(2)S. This chain is Thiazole synthase, found in Psychrobacter cryohalolentis (strain ATCC BAA-1226 / DSM 17306 / VKM B-2378 / K5).